The primary structure comprises 129 residues: Glycerol-3-phosphate cytidylyltransferase (129 aa).

CTP contacts are provided by residues 9–10 (TF) and 14–17 (HYGH). Lys-44 is a substrate binding site. Lys-46 provides a ligand contact to CTP. Position 77 (Lys-77) interacts with substrate. Residue 113-120 (RTDGISTT) participates in CTP binding.

It belongs to the cytidylyltransferase family. Homodimer.

Its subcellular location is the cytoplasm. It carries out the reaction sn-glycerol 3-phosphate + CTP + H(+) = CDP-glycerol + diphosphate. The protein operates within cell wall biogenesis; poly(ribitol phosphate) teichoic acid biosynthesis. Its function is as follows. Catalyzes the transfer of the cytidylyl group of CTP to sn-glycerol 3-phosphate so the activated glycerol 3-phosphate can be used for teichoic acid synthesis, via incorporation into both the linkage unit by TarB and TarF. In Bacillus spizizenii (strain ATCC 23059 / NRRL B-14472 / W23) (Bacillus subtilis subsp. spizizenii), this protein is Glycerol-3-phosphate cytidylyltransferase (tarD).